The primary structure comprises 103 residues: Large ribosomal subunit protein bL21 (103 aa).

It belongs to the bacterial ribosomal protein bL21 family. Part of the 50S ribosomal subunit. Contacts protein L20.

Functionally, this protein binds to 23S rRNA in the presence of protein L20. The chain is Large ribosomal subunit protein bL21 from Thioalkalivibrio sulfidiphilus (strain HL-EbGR7).